Consider the following 102-residue polypeptide: uncharacterized protein (102 aa).

Belongs to the Gram-positive plasmids replication protein type 2 family.

This is an uncharacterized protein from Staphylococcus aureus.